A 915-amino-acid chain; its full sequence is Alanine--tRNA ligase (915 aa).

Residues H609, H613, C712, and H716 each coordinate Zn(2+).

Belongs to the class-II aminoacyl-tRNA synthetase family. Zn(2+) is required as a cofactor.

It is found in the cytoplasm. The catalysed reaction is tRNA(Ala) + L-alanine + ATP = L-alanyl-tRNA(Ala) + AMP + diphosphate. In terms of biological role, catalyzes the attachment of alanine to tRNA(Ala) in a two-step reaction: alanine is first activated by ATP to form Ala-AMP and then transferred to the acceptor end of tRNA(Ala). Also edits incorrectly charged Ser-tRNA(Ala) and Gly-tRNA(Ala) via its editing domain. This chain is Alanine--tRNA ligase, found in Methanoculleus marisnigri (strain ATCC 35101 / DSM 1498 / JR1).